The sequence spans 260 residues: Malonyl-[acyl-carrier protein] O-methyltransferase (260 aa).

This sequence belongs to the methyltransferase superfamily.

The catalysed reaction is malonyl-[ACP] + S-adenosyl-L-methionine = malonyl-[ACP] methyl ester + S-adenosyl-L-homocysteine. It participates in cofactor biosynthesis; biotin biosynthesis. Its function is as follows. Converts the free carboxyl group of a malonyl-thioester to its methyl ester by transfer of a methyl group from S-adenosyl-L-methionine (SAM). It allows to synthesize pimeloyl-ACP via the fatty acid synthetic pathway. In Herminiimonas arsenicoxydans, this protein is Malonyl-[acyl-carrier protein] O-methyltransferase.